Here is a 285-residue protein sequence, read N- to C-terminus: Inositol oxygenase (285 aa).

The disordered stretch occupies residues 1–28 (MKVAADPDPSLVSQRDMEPEAAKDKDSF). A compositionally biased stretch (basic and acidic residues) spans 15–28 (RDMEPEAAKDKDSF). Substrate is bound at residue Arg-29. Ser-33 is modified (phosphoserine). 85–87 (DES) contributes to the substrate binding site. Fe cation contacts are provided by His-98, His-123, and Asp-124. Residues Lys-127 and 141–142 (GD) contribute to the substrate site. 3 residues coordinate Fe cation: His-194, His-220, and Asp-253. 220–221 (HS) contacts substrate.

This sequence belongs to the myo-inositol oxygenase family. Fe cation is required as a cofactor.

It localises to the cytoplasm. It catalyses the reaction myo-inositol + O2 = D-glucuronate + H2O + H(+). Its pathway is polyol metabolism; myo-inositol degradation into D-glucuronate; D-glucuronate from myo-inositol: step 1/1. This chain is Inositol oxygenase (MIOX), found in Bos taurus (Bovine).